Consider the following 27-residue polypeptide: AVDKGGGKAEKKDGNRKKKLAGGEGGG.

The segment covering 1-13 has biased composition (basic and acidic residues); it reads AVDKGGGKAEKKD. Positions 1–27 are disordered; sequence AVDKGGGKAEKKDGNRKKKLAGGEGGG.

The protein localises to the secreted. Peptide with unknown function. Does not show antimicrobial and hemolytic activities. The sequence is that of Equinin A from Actinia equina (Beadlet anemone).